The sequence spans 104 residues: L-rhamnose mutarotase (104 aa).

Substrate is bound at residue Tyr-18. The Proton donor role is filled by His-22. Residues Tyr-41 and 76–77 contribute to the substrate site; that span reads WW.

The protein belongs to the rhamnose mutarotase family. As to quaternary structure, homodimer.

Its subcellular location is the cytoplasm. The catalysed reaction is alpha-L-rhamnose = beta-L-rhamnose. The protein operates within carbohydrate metabolism; L-rhamnose metabolism. Involved in the anomeric conversion of L-rhamnose. In Escherichia coli (strain K12 / MC4100 / BW2952), this protein is L-rhamnose mutarotase.